A 1187-amino-acid chain; its full sequence is uncharacterized protein (1187 aa).

Polar residues predominate over residues 38-57 (KNNQDIPTSNTNISPKPISQ). Disordered regions lie at residues 38-127 (KNNQ…NSPT), 189-215 (ISRSSSSSSSSSSSSSGKSNENSIHLN), 248-287 (TQPPQPYPQQIQPPQEQLQQHQSQAPHSPLPQPQPPSQLQ), 358-415 (NNNS…NSNS), 443-490 (FPNN…INNN), 536-689 (QFPF…SSLN), 752-840 (SINN…NKSI), and 1079-1187 (HNNN…NLQK). Low complexity-rich tracts occupy residues 71 to 84 (KPIVPSTSSTSTLI), 104 to 124 (PSSSSSSSSSSLSSSSTSIPN), 190 to 215 (SRSSSSSSSSSSSSSGKSNENSIHLN), and 248 to 274 (TQPPQPYPQQIQPPQEQLQQHQSQAPH). Positions 443–455 (FPNNTDENYPSDH) are enriched in polar residues. Composition is skewed to low complexity over residues 458–490 (NDNNNDKNNNTNNNIIINDDNNNNPNNNNINNN), 543–570 (TTESGFSSTSTTPSSTSVPSSLSNSSSA), 585–653 (INNL…SNIN), 662–689 (PNSPISNYSSMSSSSSPNSFTSSTSSLN), 752–790 (SINNNNNNDKNNDIDNSNENLTTTTTTTTTTTTTTTTNN), and 797–809 (NYKINNYNNNIDN). Residues 815–832 (NDDDNDDDDDDDVDDNDD) show a composition bias toward acidic residues. Low complexity-rich tracts occupy residues 1079 to 1149 (HNNN…PSNN) and 1156 to 1174 (KNNNNNNNNNNNNNNNNTN).

This is an uncharacterized protein from Dictyostelium discoideum (Social amoeba).